The following is a 406-amino-acid chain: Imidazolonepropionase (406 aa).

Histidine 72 and histidine 74 together coordinate Fe(3+). Zn(2+) is bound by residues histidine 72 and histidine 74. 4-imidazolone-5-propanoate contacts are provided by arginine 81, tyrosine 144, and histidine 177. Tyrosine 144 contributes to the N-formimidoyl-L-glutamate binding site. Histidine 242 contacts Fe(3+). Histidine 242 contributes to the Zn(2+) binding site. Residue glutamine 245 participates in 4-imidazolone-5-propanoate binding. Residue aspartate 317 participates in Fe(3+) binding. Aspartate 317 contacts Zn(2+). N-formimidoyl-L-glutamate contacts are provided by asparagine 319 and glycine 321. A 4-imidazolone-5-propanoate-binding site is contributed by threonine 322.

It belongs to the metallo-dependent hydrolases superfamily. HutI family. Zn(2+) serves as cofactor. It depends on Fe(3+) as a cofactor.

The protein resides in the cytoplasm. It carries out the reaction 4-imidazolone-5-propanoate + H2O = N-formimidoyl-L-glutamate. It functions in the pathway amino-acid degradation; L-histidine degradation into L-glutamate; N-formimidoyl-L-glutamate from L-histidine: step 3/3. Its function is as follows. Catalyzes the hydrolytic cleavage of the carbon-nitrogen bond in imidazolone-5-propanoate to yield N-formimidoyl-L-glutamate. It is the third step in the universal histidine degradation pathway. This Yersinia pseudotuberculosis serotype O:3 (strain YPIII) protein is Imidazolonepropionase.